Here is a 458-residue protein sequence, read N- to C-terminus: Bifunctional protein GlmU (458 aa).

A pyrophosphorylase region spans residues 1-229; the sequence is MTNYAIILAA…FNESLGVNDR (229 aa). Residues 8–11, lysine 22, glutamine 72, and 77–78 contribute to the UDP-N-acetyl-alpha-D-glucosamine site; these read LAAG and GT. A Mg(2+)-binding site is contributed by aspartate 102. Positions 139, 154, 169, and 227 each coordinate UDP-N-acetyl-alpha-D-glucosamine. Asparagine 227 contributes to the Mg(2+) binding site. Residues 230-250 are linker; the sequence is VALATAESVMRRRINKAHMIN. Positions 251–458 are N-acetyltransferase; the sequence is GVTFQNPDAT…AKRLPHYPQK (208 aa). 2 residues coordinate UDP-N-acetyl-alpha-D-glucosamine: arginine 332 and lysine 350. Histidine 362 functions as the Proton acceptor in the catalytic mechanism. The UDP-N-acetyl-alpha-D-glucosamine site is built by tyrosine 365 and asparagine 376. Acetyl-CoA contacts are provided by residues alanine 379, 385 to 386, serine 404, alanine 422, and arginine 439; that span reads NY.

The protein in the N-terminal section; belongs to the N-acetylglucosamine-1-phosphate uridyltransferase family. It in the C-terminal section; belongs to the transferase hexapeptide repeat family. Homotrimer. Mg(2+) serves as cofactor.

The protein localises to the cytoplasm. The catalysed reaction is alpha-D-glucosamine 1-phosphate + acetyl-CoA = N-acetyl-alpha-D-glucosamine 1-phosphate + CoA + H(+). It catalyses the reaction N-acetyl-alpha-D-glucosamine 1-phosphate + UTP + H(+) = UDP-N-acetyl-alpha-D-glucosamine + diphosphate. It functions in the pathway nucleotide-sugar biosynthesis; UDP-N-acetyl-alpha-D-glucosamine biosynthesis; N-acetyl-alpha-D-glucosamine 1-phosphate from alpha-D-glucosamine 6-phosphate (route II): step 2/2. The protein operates within nucleotide-sugar biosynthesis; UDP-N-acetyl-alpha-D-glucosamine biosynthesis; UDP-N-acetyl-alpha-D-glucosamine from N-acetyl-alpha-D-glucosamine 1-phosphate: step 1/1. It participates in bacterial outer membrane biogenesis; LPS lipid A biosynthesis. Its function is as follows. Catalyzes the last two sequential reactions in the de novo biosynthetic pathway for UDP-N-acetylglucosamine (UDP-GlcNAc). The C-terminal domain catalyzes the transfer of acetyl group from acetyl coenzyme A to glucosamine-1-phosphate (GlcN-1-P) to produce N-acetylglucosamine-1-phosphate (GlcNAc-1-P), which is converted into UDP-GlcNAc by the transfer of uridine 5-monophosphate (from uridine 5-triphosphate), a reaction catalyzed by the N-terminal domain. The sequence is that of Bifunctional protein GlmU from Streptococcus uberis (strain ATCC BAA-854 / 0140J).